The sequence spans 185 residues: MMLERIEAIERITGVLEDELVICNLGFPSRELYSIRDSPRHFYMLGSMGMASSIGLGLALSQERRVVVLDGDGSILMNLGGLVTAAAQSPGNLIIVLLDNRCYATTGSQCTYADVIDLGAVAESMGFNVIRFADDLNFEQALAMDGPVFAHVPVKPGNADVPVIDLDAEEIIERFIKEVRGATED.

Belongs to the TPP enzyme family. As to quaternary structure, heterododecamer composed of 6 subunits alpha and 6 subunits beta. It depends on thiamine diphosphate as a cofactor.

The catalysed reaction is 3-sulfopyruvate + H(+) = sulfoacetaldehyde + CO2. Its pathway is cofactor biosynthesis; coenzyme M biosynthesis; sulfoacetaldehyde from phosphoenolpyruvate and sulfite: step 4/4. Its function is as follows. Involved in the biosynthesis of the coenzyme M (2-mercaptoethanesulfonic acid). Catalyzes the decarboxylation of sulfopyruvate to sulfoacetaldehyde. The sequence is that of Sulfopyruvate decarboxylase subunit beta from Methanothermobacter thermautotrophicus (strain ATCC 29096 / DSM 1053 / JCM 10044 / NBRC 100330 / Delta H) (Methanobacterium thermoautotrophicum).